The following is a 629-amino-acid chain: tRNA uridine 5-carboxymethylaminomethyl modification enzyme MnmG (629 aa).

13–18 contributes to the FAD binding site; it reads GGGHAG. An NAD(+)-binding site is contributed by 273–287; the sequence is GPRYCPSIEDKIHRF.

The protein belongs to the MnmG family. Homodimer. Heterotetramer of two MnmE and two MnmG subunits. The cofactor is FAD.

It localises to the cytoplasm. Its function is as follows. NAD-binding protein involved in the addition of a carboxymethylaminomethyl (cmnm) group at the wobble position (U34) of certain tRNAs, forming tRNA-cmnm(5)s(2)U34. In Shewanella baltica (strain OS195), this protein is tRNA uridine 5-carboxymethylaminomethyl modification enzyme MnmG.